The primary structure comprises 240 residues: Predicted GPI-anchored protein 58 (240 aa).

A signal peptide spans 1-18 (MQFSTLVSLAAVIVSTNA). The tract at residues 41 to 216 (HTNCPASSPA…NSTGPSSVPT (176 aa)) is disordered. Over residues 51–86 (TPAPAPSASAPAPPAPEQPEPSAPAPAPSAPAPEQP) the composition is skewed to pro residues. Low complexity predominate over residues 87-103 (EQPATPATPAAPATPAT). Pro residues-rich tracts occupy residues 104-137 (PAAP…PEQP) and 153-192 (APAP…PAPS). Residues 193-216 (APASVPEQPASSVSNSTGPSSVPT) show a composition bias toward low complexity. A glycan (N-linked (GlcNAc...) asparagine) is linked at Asn-207. A lipid anchor (GPI-anchor amidated glycine) is attached at Gly-219. The propeptide at 220 to 240 (AAAKQYITGSVAVIAAALLAL) is removed in mature form.

It localises to the cell membrane. This chain is Predicted GPI-anchored protein 58 (PGA58), found in Candida albicans (strain SC5314 / ATCC MYA-2876) (Yeast).